The sequence spans 213 residues: uncharacterized protein (213 aa).

Residues Gly-53, Glu-74, and Asp-96 each contribute to the S-adenosyl-L-methionine site.

Belongs to the methyltransferase superfamily. YrrT family.

Could be a S-adenosyl-L-methionine-dependent methyltransferase. This is an uncharacterized protein from Bacillus pumilus (strain SAFR-032).